The following is an 88-amino-acid chain: Small ribosomal subunit protein uS15c (88 aa).

Belongs to the universal ribosomal protein uS15 family. In terms of assembly, part of the 30S ribosomal subunit.

The protein localises to the plastid. Its subcellular location is the chloroplast. In Physcomitrium patens (Spreading-leaved earth moss), this protein is Small ribosomal subunit protein uS15c (rps15).